Consider the following 69-residue polypeptide: Putative membrane protein insertion efficiency factor (69 aa).

This sequence belongs to the UPF0161 family.

It localises to the cell membrane. Could be involved in insertion of integral membrane proteins into the membrane. The sequence is that of Putative membrane protein insertion efficiency factor from Clostridium botulinum (strain Okra / Type B1).